The primary structure comprises 173 residues: NADH-ubiquinone oxidoreductase chain 6 (173 aa).

The next 5 membrane-spanning stretches (helical) occupy residues 1 to 21 (MTYF…AVAS), 27 to 47 (YGVV…LSLG), 48 to 68 (VSFV…VVFV), 87 to 107 (VVGY…VGGF), and 139 to 159 (CGVG…FVVL).

Belongs to the complex I subunit 6 family.

It localises to the mitochondrion membrane. The enzyme catalyses a ubiquinone + NADH + 5 H(+)(in) = a ubiquinol + NAD(+) + 4 H(+)(out). Functionally, core subunit of the mitochondrial membrane respiratory chain NADH dehydrogenase (Complex I) that is believed to belong to the minimal assembly required for catalysis. Complex I functions in the transfer of electrons from NADH to the respiratory chain. The immediate electron acceptor for the enzyme is believed to be ubiquinone. In Aethia pusilla (Least auklet), this protein is NADH-ubiquinone oxidoreductase chain 6 (MT-ND6).